A 406-amino-acid polypeptide reads, in one-letter code: 3-phosphoshikimate 1-carboxyvinyltransferase (406 aa).

Positions 20, 21, and 25 each coordinate 3-phosphoshikimate. Lysine 20 serves as a coordination point for phosphoenolpyruvate. Glycine 84 and arginine 112 together coordinate phosphoenolpyruvate. Serine 155, serine 156, glutamine 157, aspartate 295, glutamine 317, and lysine 321 together coordinate 3-phosphoshikimate. Glutamine 157 provides a ligand contact to phosphoenolpyruvate. Aspartate 295 (proton acceptor) is an active-site residue. Positions 325, 366, and 392 each coordinate phosphoenolpyruvate.

Belongs to the EPSP synthase family. As to quaternary structure, monomer.

The protein resides in the cytoplasm. The catalysed reaction is 3-phosphoshikimate + phosphoenolpyruvate = 5-O-(1-carboxyvinyl)-3-phosphoshikimate + phosphate. It functions in the pathway metabolic intermediate biosynthesis; chorismate biosynthesis. Its function is as follows. Catalyzes the transfer of the enolpyruvyl moiety of phosphoenolpyruvate (PEP) to the 5-hydroxyl of shikimate-3-phosphate (S3P) to produce enolpyruvyl shikimate-3-phosphate and inorganic phosphate. This chain is 3-phosphoshikimate 1-carboxyvinyltransferase, found in Pyrococcus furiosus (strain ATCC 43587 / DSM 3638 / JCM 8422 / Vc1).